We begin with the raw amino-acid sequence, 845 residues long: Probable inorganic carbon transporter subunit DabA (845 aa).

A disordered region spans residues 1-20 (MPMASGDESMSARSENPVQS). Zn(2+) is bound by residues C345, D347, H516, and C531.

It belongs to the inorganic carbon transporter (TC 9.A.2) DabA family. In terms of assembly, forms a complex with DabB. It depends on Zn(2+) as a cofactor.

The protein resides in the cell inner membrane. Functionally, part of an energy-coupled inorganic carbon pump. The chain is Probable inorganic carbon transporter subunit DabA from Azotobacter vinelandii (strain DJ / ATCC BAA-1303).